We begin with the raw amino-acid sequence, 289 residues long: Diaminopimelate epimerase (289 aa).

Substrate-binding residues include Asn-17, Gln-47, and Asn-67. Cys-76 functions as the Proton donor in the catalytic mechanism. Substrate contacts are provided by residues 77–78 (GN), Asn-164, Asn-198, and 216–217 (ER). The active-site Proton acceptor is Cys-225. Residue 226-227 (GS) participates in substrate binding.

It belongs to the diaminopimelate epimerase family. In terms of assembly, homodimer.

It is found in the cytoplasm. It catalyses the reaction (2S,6S)-2,6-diaminopimelate = meso-2,6-diaminopimelate. The protein operates within amino-acid biosynthesis; L-lysine biosynthesis via DAP pathway; DL-2,6-diaminopimelate from LL-2,6-diaminopimelate: step 1/1. Its function is as follows. Catalyzes the stereoinversion of LL-2,6-diaminopimelate (L,L-DAP) to meso-diaminopimelate (meso-DAP), a precursor of L-lysine and an essential component of the bacterial peptidoglycan. This is Diaminopimelate epimerase from Bradyrhizobium sp. (strain BTAi1 / ATCC BAA-1182).